The chain runs to 635 residues: Cell pattern formation-associated protein stuA (635 aa).

Disordered regions lie at residues 1 to 21 (MNQTQPYMDVHSSHLSSAQPY) and 63 to 82 (SGVASSQTAPPPPSTSMSSQ). Positions 129-235 (RVTATLWEDE…HNIGGLLYHP (107 aa)) constitute an HTH APSES-type domain. The segment at residues 163 to 184 (GTKLLNVAGMTRGRRDGILKSE) is a DNA-binding region (H-T-H motif). 2 disordered regions span residues 246 to 480 (QESQ…ASRS) and 498 to 635 (SQLT…PRRR). Composition is skewed to low complexity over residues 276 to 294 (MQTSIPSQMPQPPTMSSQP) and 312 to 325 (SASSLMGLSNQSSS). Polar residues predominate over residues 326-355 (YDWNNQGMNSGVPNTQPLSIDTTLSNTRSM). Positions 356 to 380 (PTTPATTPPGNNLQGMQSYQSQSGY) are enriched in low complexity. The segment covering 460-469 (APEHESEYVQ) has biased composition (basic and acidic residues). Polar residues-rich tracts occupy residues 498–513 (SQLTNDITGSPQQNGS) and 539–571 (AASSLYNIVSDTRGSSNGAGSENYTVASNTAPT). The segment at 582 to 605 (KRGREDDDMGRPDSQGDYESKRRR) is nuclear localization domain. Basic and acidic residues predominate over residues 583–592 (RGREDDDMGR).

It belongs to the EFG1/PHD1/stuA family.

Transcription factor that regulates asexual reproduction. Binds the StuA-response elements (StRE) with the consensus sequence 5'-(A/T)CGCG(T/A)N(A/C)-3' at the promoters of target genes. Controls the expression of 6 secondary metabolite biosynthetic clusters including 2 involved in the synthesis of alkaloids (fumigaclavine and fumitremorgen), 2 clusters of the ETP class (gliotoxin and an unknown ETP-like toxin), a cluster predicted to produce pseurotin A, and the product of the last cluster is unknown. Controls the production of ergot alkaloids during conidiophore development. Controls expression of sspA and gliP. Involved in the induction of immunoglobulin E-independent mast cell degranulation. This chain is Cell pattern formation-associated protein stuA, found in Aspergillus fumigatus (strain ATCC MYA-4609 / CBS 101355 / FGSC A1100 / Af293) (Neosartorya fumigata).